Consider the following 463-residue polypeptide: Putative F-box protein At3g29830 (463 aa).

An F-box domain is found at 7-55; it reads RDRISSLPDVVLVMILSFLSFKDNVKTSILSKRWRNICYEAKNISFKES.

This is Putative F-box protein At3g29830 from Arabidopsis thaliana (Mouse-ear cress).